A 394-amino-acid chain; its full sequence is Quinolinate synthase (394 aa).

Iminosuccinate-binding residues include histidine 67 and serine 84. Cysteine 131 contacts [4Fe-4S] cluster. Iminosuccinate contacts are provided by residues 163 to 165 (YMN) and serine 184. Residue cysteine 254 participates in [4Fe-4S] cluster binding. Iminosuccinate-binding positions include 280–282 (HPE) and threonine 297. Residue cysteine 346 participates in [4Fe-4S] cluster binding.

It belongs to the quinolinate synthase family. Type 3 subfamily. [4Fe-4S] cluster is required as a cofactor.

The protein localises to the cytoplasm. It carries out the reaction iminosuccinate + dihydroxyacetone phosphate = quinolinate + phosphate + 2 H2O + H(+). The protein operates within cofactor biosynthesis; NAD(+) biosynthesis; quinolinate from iminoaspartate: step 1/1. In terms of biological role, catalyzes the condensation of iminoaspartate with dihydroxyacetone phosphate to form quinolinate. The polypeptide is Quinolinate synthase (Streptomyces coelicolor (strain ATCC BAA-471 / A3(2) / M145)).